The following is a 424-amino-acid chain: MWENVKKVDPEIYEVILKEWDRQEYGLELIASENFASLAVIEAMGSVLTNKYAEGYPGRRYYGGCEWVDVAEKLARDRAKELFNVKYANVQPHSGSQANMGAYFAVSEPGDTIMGMSLSHGGHLTHGAPVNFSGRIYNVVSYGVDSETEVINYDEVRELALKHKPKIIIAGGSAYSKIIDFKRFREIADEVGAYLIVDMAHFAGLVAAGIYPNPAEYAHIVTSTTHKTLRGPRGGMILTNDKELYKAINKSIFPGIQGGPLMHVIAAKAVCFKEALTDEFKAYQNQVVKNAKKLAEELEKRGLRIVSGGTDTHLMLVDLNPLNVTGKAAEIALGKCHVTVNKNTIPNETRSPFVASGIRLGTPALTTRGMKESEMEEIAELIVKVLENVKDEEGNVDDSIVEDVQKKVRDLCERFPLYEGKIRL.

Residues Leu-118 and 122–124 (GHL) contribute to the (6S)-5,6,7,8-tetrahydrofolate site. Lys-227 carries the post-translational modification N6-(pyridoxal phosphate)lysine. 351-353 (SPF) is a (6S)-5,6,7,8-tetrahydrofolate binding site.

Belongs to the SHMT family. As to quaternary structure, homodimer. Pyridoxal 5'-phosphate serves as cofactor.

Its subcellular location is the cytoplasm. It catalyses the reaction (6R)-5,10-methylene-5,6,7,8-tetrahydrofolate + glycine + H2O = (6S)-5,6,7,8-tetrahydrofolate + L-serine. The protein operates within one-carbon metabolism; tetrahydrofolate interconversion. Its pathway is amino-acid biosynthesis; glycine biosynthesis; glycine from L-serine: step 1/1. Functionally, catalyzes the reversible interconversion of serine and glycine with tetrahydrofolate (THF) serving as the one-carbon carrier. This reaction serves as the major source of one-carbon groups required for the biosynthesis of purines, thymidylate, methionine, and other important biomolecules. Also exhibits THF-independent aldolase activity toward beta-hydroxyamino acids, producing glycine and aldehydes, via a retro-aldol mechanism. In Thermosipho melanesiensis (strain DSM 12029 / CIP 104789 / BI429), this protein is Serine hydroxymethyltransferase.